A 152-amino-acid polypeptide reads, in one-letter code: Cytochrome c-type biogenesis CcmH-like mitochondrial protein (152 aa).

Over Met1–Gln83 the chain is Mitochondrial intermembrane. Positions 26 and 29 each coordinate heme. A helical transmembrane segment spans residues Thr84 to Tyr104. Residues Gln105–Lys152 lie on the Mitochondrial matrix side of the membrane.

This sequence belongs to the CcmH/CycL/Ccl2/NrfF family.

The protein resides in the mitochondrion inner membrane. In terms of biological role, plays a role in mitochondrial cytochrome c maturation. Probable component of a heme lyase complex involved in the reduction of apocytochrome c. The polypeptide is Cytochrome c-type biogenesis CcmH-like mitochondrial protein (Oryza sativa subsp. japonica (Rice)).